A 577-amino-acid polypeptide reads, in one-letter code: Proline--tRNA ligase (577 aa).

The protein belongs to the class-II aminoacyl-tRNA synthetase family. ProS type 1 subfamily. Homodimer.

It is found in the cytoplasm. The catalysed reaction is tRNA(Pro) + L-proline + ATP = L-prolyl-tRNA(Pro) + AMP + diphosphate. Its function is as follows. Catalyzes the attachment of proline to tRNA(Pro) in a two-step reaction: proline is first activated by ATP to form Pro-AMP and then transferred to the acceptor end of tRNA(Pro). As ProRS can inadvertently accommodate and process non-cognate amino acids such as alanine and cysteine, to avoid such errors it has two additional distinct editing activities against alanine. One activity is designated as 'pretransfer' editing and involves the tRNA(Pro)-independent hydrolysis of activated Ala-AMP. The other activity is designated 'posttransfer' editing and involves deacylation of mischarged Ala-tRNA(Pro). The misacylated Cys-tRNA(Pro) is not edited by ProRS. This Helicobacter pylori (strain P12) protein is Proline--tRNA ligase.